The primary structure comprises 331 residues: MKQIVYVASPESQQIHVWQMDNQGALTLLQVVDTPGQGQPMVIHPARTHLYIGVRPSFGVVSYRIDEKGLLTEAGMAPLPGSPTQLTTDLQGETLYSVSYSGSCLSVSPIDEQGIVGAPTQTLEGLTHCHSANVDTTNQVLWVPCLQEDRIRLYTIGEAGHLTPRTPEALDSVAGAGPRHMVFHHGGGYAYAINELSGTVNVIAIDAAGAGPRIVQTLDIMPAGFSDTRWAADIYITPDGRWLYCCDRTASVISRFAVSEDGGVLRLLGHQATESQPRGFNIDSQGRFLVAAGQKSHHIAVYAIDAQSGALDPLARYAVGQGPMWVSVLAR.

This sequence belongs to the cycloisomerase 2 family.

It catalyses the reaction 6-phospho-D-glucono-1,5-lactone + H2O = 6-phospho-D-gluconate + H(+). It functions in the pathway carbohydrate degradation; pentose phosphate pathway; D-ribulose 5-phosphate from D-glucose 6-phosphate (oxidative stage): step 2/3. Catalyzes the hydrolysis of 6-phosphogluconolactone to 6-phosphogluconate. This Sodalis glossinidius (strain morsitans) protein is 6-phosphogluconolactonase.